The chain runs to 156 residues: ATP synthase subunit b (156 aa).

A helical transmembrane segment spans residues 3 to 23 (ITFTIFAQSIAFAALIWIVAT).

The protein belongs to the ATPase B chain family. As to quaternary structure, F-type ATPases have 2 components, F(1) - the catalytic core - and F(0) - the membrane proton channel. F(1) has five subunits: alpha(3), beta(3), gamma(1), delta(1), epsilon(1). F(0) has three main subunits: a(1), b(2) and c(10-14). The alpha and beta chains form an alternating ring which encloses part of the gamma chain. F(1) is attached to F(0) by a central stalk formed by the gamma and epsilon chains, while a peripheral stalk is formed by the delta and b chains.

The protein localises to the cell inner membrane. Functionally, f(1)F(0) ATP synthase produces ATP from ADP in the presence of a proton or sodium gradient. F-type ATPases consist of two structural domains, F(1) containing the extramembraneous catalytic core and F(0) containing the membrane proton channel, linked together by a central stalk and a peripheral stalk. During catalysis, ATP synthesis in the catalytic domain of F(1) is coupled via a rotary mechanism of the central stalk subunits to proton translocation. In terms of biological role, component of the F(0) channel, it forms part of the peripheral stalk, linking F(1) to F(0). This is ATP synthase subunit b from Xylella fastidiosa (strain M12).